Consider the following 295-residue polypeptide: Pyridoxal 5'-phosphate synthase subunit PdxS (295 aa).

Residue Asp23 participates in D-ribose 5-phosphate binding. Catalysis depends on Lys80, which acts as the Schiff-base intermediate with D-ribose 5-phosphate. Gly152 is a D-ribose 5-phosphate binding site. Arg164 is a binding site for D-glyceraldehyde 3-phosphate. D-ribose 5-phosphate contacts are provided by residues Gly213 and 234–235; that span reads GS.

It belongs to the PdxS/SNZ family. In terms of assembly, in the presence of PdxT, forms a dodecamer of heterodimers.

The catalysed reaction is aldehydo-D-ribose 5-phosphate + D-glyceraldehyde 3-phosphate + L-glutamine = pyridoxal 5'-phosphate + L-glutamate + phosphate + 3 H2O + H(+). It functions in the pathway cofactor biosynthesis; pyridoxal 5'-phosphate biosynthesis. In terms of biological role, catalyzes the formation of pyridoxal 5'-phosphate from ribose 5-phosphate (RBP), glyceraldehyde 3-phosphate (G3P) and ammonia. The ammonia is provided by the PdxT subunit. Can also use ribulose 5-phosphate and dihydroxyacetone phosphate as substrates, resulting from enzyme-catalyzed isomerization of RBP and G3P, respectively. The protein is Pyridoxal 5'-phosphate synthase subunit PdxS of Methanosphaera stadtmanae (strain ATCC 43021 / DSM 3091 / JCM 11832 / MCB-3).